The sequence spans 213 residues: mRNA-decapping protein OPG121 (213 aa).

E16 and R50 together coordinate N(7)-methyl-GTP. In terms of domain architecture, Nudix hydrolase spans 30-209; the sequence is KDTHVFAACI…EYLSYIYNML (180 aa). The Nudix box signature appears at 111–132; that stretch reads GKLDKKESIKDCLRRELKEESD. Residues E117, E126, E130, D151, and E183 each contribute to the Mg(2+) site. The Nucleophile role is filled by E126. D151 contributes to the N(7)-methyl-GTP binding site.

It belongs to the Nudix hydrolase family. Requires Mg(2+) as cofactor. Mn(2+) serves as cofactor.

It carries out the reaction a 5'-end (N(7)-methyl 5'-triphosphoguanosine)-guanosine in mRNA + H2O = a 5'-end phospho-guanosine in mRNA + N(7)-methyl-GDP + 2 H(+). In terms of biological role, decapping enzyme that remove the protective 5'-cap from both host and viral mRNAs to commit transcripts for decay by the cellular exonuclease XRN1. Accelerates viral and cellular mRNA turnover to eliminate competing host mRNAs and allow stage-specific synthesis of viral proteins. Acceleration of the turnover of cellular transcripts may even promote the shutoff of host protein synthesis. The chain is mRNA-decapping protein OPG121 (OPG121) from Homo sapiens (Human).